Consider the following 360-residue polypeptide: Photosystem II protein D1 (360 aa).

3 helical membrane-spanning segments follow: residues 29–46 (YIGW…TATS), 118–133 (HFLL…EWEL), and 142–156 (WIFV…AASA). Chlorophyll a is bound at residue His-118. Tyr-126 contributes to the pheophytin a binding site. Residues Asp-170 and Glu-189 each coordinate [CaMn4O5] cluster. Residues 197 to 218 (FHMAGVAGVFGGSLFSAMHGSL) form a helical membrane-spanning segment. Residue His-198 participates in chlorophyll a binding. A quinone is bound by residues His-215 and 264-265 (SF). His-215 lines the Fe cation pocket. Position 272 (His-272) interacts with Fe cation. A helical transmembrane segment spans residues 274–288 (FLALWPVVGIWLTAM). [CaMn4O5] cluster-binding residues include His-332, Glu-333, Asp-342, and Ala-344. A propeptide spanning residues 345 to 360 (SGEVLPVALTAPAVNG) is cleaved from the precursor.

Belongs to the reaction center PufL/M/PsbA/D family. PSII is composed of 1 copy each of membrane proteins PsbA, PsbB, PsbC, PsbD, PsbE, PsbF, PsbH, PsbI, PsbJ, PsbK, PsbL, PsbM, PsbT, PsbX, PsbY, PsbZ, Psb30/Ycf12, at least 3 peripheral proteins of the oxygen-evolving complex and a large number of cofactors. It forms dimeric complexes. Requires The D1/D2 heterodimer binds P680, chlorophylls that are the primary electron donor of PSII, and subsequent electron acceptors. It shares a non-heme iron and each subunit binds pheophytin, quinone, additional chlorophylls, carotenoids and lipids. D1 provides most of the ligands for the Mn4-Ca-O5 cluster of the oxygen-evolving complex (OEC). There is also a Cl(-1) ion associated with D1 and D2, which is required for oxygen evolution. The PSII complex binds additional chlorophylls, carotenoids and specific lipids. as cofactor. Tyr-161 forms a radical intermediate that is referred to as redox-active TyrZ, YZ or Y-Z. In terms of processing, C-terminally processed by CTPA; processing is essential to allow assembly of the oxygen-evolving complex and thus photosynthetic growth.

The protein localises to the plastid. It localises to the chloroplast thylakoid membrane. The catalysed reaction is 2 a plastoquinone + 4 hnu + 2 H2O = 2 a plastoquinol + O2. Functionally, photosystem II (PSII) is a light-driven water:plastoquinone oxidoreductase that uses light energy to abstract electrons from H(2)O, generating O(2) and a proton gradient subsequently used for ATP formation. It consists of a core antenna complex that captures photons, and an electron transfer chain that converts photonic excitation into a charge separation. The D1/D2 (PsbA/PsbD) reaction center heterodimer binds P680, the primary electron donor of PSII as well as several subsequent electron acceptors. This is Photosystem II protein D1 from Phaeodactylum tricornutum (strain CCAP 1055/1).